Consider the following 742-residue polypeptide: Zinc transporter ZIP6 (742 aa).

The Extracellular segment spans residues 1–353 (MMTFLCTRSG…QRNTPVYIAW (353 aa)). 2 N-linked (GlcNAc...) asparagine glycosylation sites follow: Asn94 and Asn127. 2 disordered regions span residues 148-182 (PVTTKKGDMDHSVEKSDPVPKAQPDPASGKKSQSD) and 191-210 (MNQESTTALTTPSYVTRSRR). A compositionally biased stretch (basic and acidic residues) spans 152 to 165 (KKGDMDHSVEKSDP). Over residues 192 to 206 (NQESTTALTTPSYVT) the composition is skewed to polar residues. N-linked (GlcNAc...) asparagine glycosylation is found at Asn212, Asn232, and Asn237. The tract at residues 220 to 260 (TQDHASFSPSQPNVTHSNHTHHDEDTPTHQHDDHDEHEHAR) is disordered. Over residues 222–236 (DHASFSPSQPNVTHS) the composition is skewed to polar residues. Positions 239 to 260 (THHDEDTPTHQHDDHDEHEHAR) are enriched in basic and acidic residues. Residues Asn267 and Asn337 are each glycosylated (N-linked (GlcNAc...) asparagine). Residues 310–342 (EDEHSDHSHHHKHHHHHHDHQHLQHPHNHTNGR) are disordered. Positions 316 to 339 (HSHHHKHHHHHHDHQHLQHPHNHT) are enriched in basic residues. The chain crosses the membrane as a helical span at residues 354-374 (LGGFLSITLISLLALVGVVLI). Over 375 to 385 (PLMNRVCFNFL) the chain is Cytoplasmic. The helical transmembrane segment at 386 to 406 (LSFLVALAVGTLSGDALLHLI) threads the bilayer. Over 407-430 (PHSQGHHHHGHSEEHAEEEDSLRP) the chain is Extracellular. Residues 431–451 (VWTGLTALSGVYIMFLIEHFL) form a helical membrane-spanning segment. At 452 to 644 (TLGKMYKDKN…LKAGMSVRQA (193 aa)) the chain is on the cytoplasmic side. Residues 645–665 (MLYNLLSALMGYLGMIIGILI) form a helical membrane-spanning segment. Residues 666-671 (GHYAEN) lie on the Extracellular side of the membrane. A helical membrane pass occupies residues 672–692 (VATWIFALTAGLFMYVALVDM). Residues 693-710 (VPEMLHNDASEAGFSHYG) lie on the Cytoplasmic side of the membrane. Residues 711-731 (FFLLQNAGILLGFGIMLIIAV) form a helical membrane-spanning segment. At 732–742 (FEDRIQLDLGY) the chain is on the extracellular side.

The protein belongs to the ZIP transporter (TC 2.A.5) family. Cleaved on the N-terminus before locating to the plasma membrane. In terms of processing, N-glycosylated.

The protein resides in the cell membrane. The enzyme catalyses Zn(2+)(in) = Zn(2+)(out). Its function is as follows. Acts as a zinc-influx transporter which plays a role in zinc homeostasis and in the induction of epithelial-to-mesenchymal transition (EMT). The protein is Zinc transporter ZIP6 of Danio rerio (Zebrafish).